Consider the following 126-residue polypeptide: Glycine cleavage system H protein (126 aa).

The 83-residue stretch at 22–104 (VAYVGITDYA…YGEGWLIKMK (83 aa)) folds into the Lipoyl-binding domain. The residue at position 63 (lysine 63) is an N6-lipoyllysine.

It belongs to the GcvH family. As to quaternary structure, the glycine cleavage system is composed of four proteins: P, T, L and H. It depends on (R)-lipoate as a cofactor.

The glycine cleavage system catalyzes the degradation of glycine. The H protein shuttles the methylamine group of glycine from the P protein to the T protein. The chain is Glycine cleavage system H protein from Bacteroides fragilis (strain ATCC 25285 / DSM 2151 / CCUG 4856 / JCM 11019 / LMG 10263 / NCTC 9343 / Onslow / VPI 2553 / EN-2).